The chain runs to 36 residues: Photosystem II reaction center protein M (36 aa).

A Blocked amino end (Met) modification is found at M1. The Lumenal portion of the chain corresponds to 1-11; that stretch reads MEVNQLGFIAT. Residues 12 to 27 form a helical membrane-spanning segment; the sequence is ALFVLVPSVFLIILYV. The Cytoplasmic segment spans residues 28 to 36; the sequence is QTESQQKSS.

This sequence belongs to the PsbM family. As to quaternary structure, PSII is composed of 1 copy each of membrane proteins PsbA, PsbB, PsbC, PsbD, PsbE, PsbF, PsbH, PsbI, PsbJ, PsbK, PsbL, PsbM, PsbT, PsbX, PsbY, PsbZ, Psb30/Ycf12, peripheral proteins PsbO, CyanoQ (PsbQ), PsbU, PsbV, PsbU, PsbV and a large number of cofactors. It forms dimeric complexes. PSII binds multiple chlorophylls, carotenoids and specific lipids. serves as cofactor.

It localises to the cellular thylakoid membrane. Functionally, one of the components of the core complex of photosystem II (PSII). PSII is a light-driven water:plastoquinone oxidoreductase that uses light energy to abstract electrons from H(2)O, generating O(2) and a proton gradient subsequently used for ATP formation. It consists of a core antenna complex that captures photons, and an electron transfer chain that converts photonic excitation into a charge separation. This subunit is found at the monomer-monomer interface. Probably involved in dimerization of PSII; at the monomer-monomer interface the only protein-protein contacts observed are between the 2 PsbM subunits. Lipids, chlorophylls and carotenoids contribute strongly to PSII dimerization. In Thermostichus vulcanus (Synechococcus vulcanus), this protein is Photosystem II reaction center protein M.